The following is a 363-amino-acid chain: Aminomethyltransferase (363 aa).

It belongs to the GcvT family. In terms of assembly, the glycine cleavage system is composed of four proteins: P, T, L and H.

It carries out the reaction N(6)-[(R)-S(8)-aminomethyldihydrolipoyl]-L-lysyl-[protein] + (6S)-5,6,7,8-tetrahydrofolate = N(6)-[(R)-dihydrolipoyl]-L-lysyl-[protein] + (6R)-5,10-methylene-5,6,7,8-tetrahydrofolate + NH4(+). Its function is as follows. The glycine cleavage system catalyzes the degradation of glycine. This chain is Aminomethyltransferase, found in Staphylococcus aureus (strain bovine RF122 / ET3-1).